The following is a 790-amino-acid chain: Pentatricopeptide repeat-containing protein OTP51, chloroplastic (790 aa).

Residues 1 to 56 constitute a chloroplast transit peptide; the sequence is MATTSPCAAPSPSLRCPLALSHPFASPPPPPALRLAGPKLLPGRLAVSPPPGIPAV. 10 PPR repeats span residues 182–216, 217–254, 256–296, 299–333, 334–368, 369–403, 404–438, 439–469, 473–507, and 509–543; these read NFAL…GRVP, AEST…GGYK, RLSL…NLDV, DVYA…GFDE, GIDV…GSDL, PVQA…NIPP, NVAS…DMKH, LMPA…CIAR, NRIL…GMIG, and NTKS…KYDV. Positions 762 to 790 are disordered; the sequence is GSSIGSDGTQDTDTDSDDDMQMSDTERDE. Acidic residues predominate over residues 771–790; sequence QDTDTDSDDDMQMSDTERDE.

Belongs to the PPR family. P subfamily.

Its subcellular location is the plastid. The protein resides in the chloroplast. Functionally, promotes the splicing of group II introns in chloroplasts. Required for the splicing of intron 2 of plastid ycf3 transcripts, a factor required for the assembly of photosystem I (PSI). Involved in the splicing of atpF, ndhA, petB and rps16 chloroplastic transcripts. Required for the assembly of PSI. The polypeptide is Pentatricopeptide repeat-containing protein OTP51, chloroplastic (Oryza sativa subsp. japonica (Rice)).